Here is a 411-residue protein sequence, read N- to C-terminus: Flavohemoprotein (411 aa).

In terms of domain architecture, Globin spans 5–142 (TLSQETKQIV…IADVFIQVEK (138 aa)). His-89 serves as a coordination point for heme b. Residues Tyr-99 and Glu-141 each act as charge relay system in the active site. A reductase region spans residues 153–411 (GGWREFRSFV…FGPAGTLASS (259 aa)). An FAD-binding FR-type domain is found at 156 to 267 (REFRSFVVEK…TAPAGDFTLQ (112 aa)). Residues Tyr-194 and 210 to 213 (RQYS) each bind FAD. 280 to 285 (GVGITP) serves as a coordination point for NADP(+). 401-404 (FFGP) contacts FAD.

The protein belongs to the globin family. Two-domain flavohemoproteins subfamily. It in the C-terminal section; belongs to the flavoprotein pyridine nucleotide cytochrome reductase family. The cofactor is heme b. FAD is required as a cofactor.

It catalyses the reaction 2 nitric oxide + NADPH + 2 O2 = 2 nitrate + NADP(+) + H(+). The catalysed reaction is 2 nitric oxide + NADH + 2 O2 = 2 nitrate + NAD(+) + H(+). Its function is as follows. Is involved in NO detoxification in an aerobic process, termed nitric oxide dioxygenase (NOD) reaction that utilizes O(2) and NAD(P)H to convert NO to nitrate, which protects the bacterium from various noxious nitrogen compounds. Therefore, plays a central role in the inducible response to nitrosative stress. The protein is Flavohemoprotein of Halalkalibacterium halodurans (strain ATCC BAA-125 / DSM 18197 / FERM 7344 / JCM 9153 / C-125) (Bacillus halodurans).